We begin with the raw amino-acid sequence, 490 residues long: Glucose-6-phosphate 1-dehydrogenase (490 aa).

Residues R48, D90 to I91, and K145 each bind NADP(+). Substrate contacts are provided by H175, K179, E213, and D232. Catalysis depends on H237, which acts as the Proton acceptor. K340 and K345 together coordinate substrate.

The protein belongs to the glucose-6-phosphate dehydrogenase family.

It carries out the reaction D-glucose 6-phosphate + NADP(+) = 6-phospho-D-glucono-1,5-lactone + NADPH + H(+). It participates in carbohydrate degradation; pentose phosphate pathway; D-ribulose 5-phosphate from D-glucose 6-phosphate (oxidative stage): step 1/3. Its function is as follows. Catalyzes the oxidation of glucose 6-phosphate to 6-phosphogluconolactone. In Buchnera aphidicola subsp. Baizongia pistaciae (strain Bp), this protein is Glucose-6-phosphate 1-dehydrogenase.